An 86-amino-acid chain; its full sequence is RNA-binding protein Hfq (86 aa).

One can recognise a Sm domain in the interval 9–68 (DPYLNVLRKERIPVSIYLVNGIKLQGQVESFDQFVVLLKNTVSQMVYKHAISTVVPSRPV).

It belongs to the Hfq family. Homohexamer.

Functionally, RNA chaperone that binds small regulatory RNA (sRNAs) and mRNAs to facilitate mRNA translational regulation in response to envelope stress, environmental stress and changes in metabolite concentrations. Also binds with high specificity to tRNAs. This Saccharophagus degradans (strain 2-40 / ATCC 43961 / DSM 17024) protein is RNA-binding protein Hfq.